Consider the following 159-residue polypeptide: U1 small nuclear ribonucleoprotein C (159 aa).

A Matrin-type zinc finger spans residues 4-36 (FYCDYCDTYLTHDSPSVRKTHCSGRKHKENVKD). 2 disordered regions span residues 63-95 (PPTP…MPAP) and 139-159 (MRPP…RPDR). The span at 77–95 (IPPPPSMGGPPRPGMMPAP) shows a compositional bias: pro residues.

The protein belongs to the U1 small nuclear ribonucleoprotein C family. In terms of assembly, component of the U1 snRNP. The U1 snRNP is composed of the U1 snRNA and the 7 core Sm proteins snrpb, snrpd1, snrpd2, snrpd3, snrpe, snrpf and snrpg that assemble in a heptameric protein ring on the Sm site of the small nuclear RNA to form the core snRNP, and at least 3 U1 snRNP-specific proteins snrnp70/U1-70K, snrpa/U1-A and snrpc/U1-C. snrpc/U1-C interacts with U1 snRNA and the 5' splice-site region of the pre-mRNA.

The protein resides in the nucleus. In terms of biological role, component of the spliceosomal U1 snRNP, which is essential for recognition of the pre-mRNA 5' splice-site and the subsequent assembly of the spliceosome. snrpc/U1-C is directly involved in initial 5' splice-site recognition for both constitutive and regulated alternative splicing. The interaction with the 5' splice-site seems to precede base-pairing between the pre-mRNA and the U1 snRNA. Stimulates commitment or early (E) complex formation by stabilizing the base pairing of the 5' end of the U1 snRNA and the 5' splice-site region. This is U1 small nuclear ribonucleoprotein C from Xenopus tropicalis (Western clawed frog).